Consider the following 203-residue polypeptide: Urease accessory protein UreG (203 aa).

14-21 (GPVGSGKT) contributes to the GTP binding site.

It belongs to the SIMIBI class G3E GTPase family. UreG subfamily. Homodimer. UreD, UreF and UreG form a complex that acts as a GTP-hydrolysis-dependent molecular chaperone, activating the urease apoprotein by helping to assemble the nickel containing metallocenter of UreC. The UreE protein probably delivers the nickel.

Its subcellular location is the cytoplasm. Its function is as follows. Facilitates the functional incorporation of the urease nickel metallocenter. This process requires GTP hydrolysis, probably effectuated by UreG. This chain is Urease accessory protein UreG, found in Sinorhizobium medicae (strain WSM419) (Ensifer medicae).